The primary structure comprises 359 residues: 4-hydroxy-3-methylbut-2-en-1-yl diphosphate synthase (flavodoxin) (359 aa).

Cys263, Cys266, Cys298, and Glu305 together coordinate [4Fe-4S] cluster.

It belongs to the IspG family. The cofactor is [4Fe-4S] cluster.

It carries out the reaction (2E)-4-hydroxy-3-methylbut-2-enyl diphosphate + oxidized [flavodoxin] + H2O + 2 H(+) = 2-C-methyl-D-erythritol 2,4-cyclic diphosphate + reduced [flavodoxin]. The protein operates within isoprenoid biosynthesis; isopentenyl diphosphate biosynthesis via DXP pathway; isopentenyl diphosphate from 1-deoxy-D-xylulose 5-phosphate: step 5/6. Converts 2C-methyl-D-erythritol 2,4-cyclodiphosphate (ME-2,4cPP) into 1-hydroxy-2-methyl-2-(E)-butenyl 4-diphosphate. The protein is 4-hydroxy-3-methylbut-2-en-1-yl diphosphate synthase (flavodoxin) of Wolinella succinogenes (strain ATCC 29543 / DSM 1740 / CCUG 13145 / JCM 31913 / LMG 7466 / NCTC 11488 / FDC 602W) (Vibrio succinogenes).